We begin with the raw amino-acid sequence, 367 residues long: Putative C-&gt;U-editing enzyme APOBEC-4 (367 aa).

Residues 61–177 (PQTKHLTFYE…AWNREALRSL (117 aa)) enclose the CMP/dCMP-type deaminase domain. His93 lines the Zn(2+) pocket. Glu95 (proton donor) is an active-site residue. Zn(2+)-binding residues include Cys127 and Cys134.

It belongs to the cytidine and deoxycytidylate deaminase family. The cofactor is Zn(2+). As to expression, predominantly expressed in testis.

Functionally, putative C to U editing enzyme whose physiological substrate is not yet known. The polypeptide is Putative C-&gt;U-editing enzyme APOBEC-4 (APOBEC4) (Homo sapiens (Human)).